The chain runs to 189 residues: Peptidyl-tRNA hydrolase (189 aa).

Tyrosine 14 lines the tRNA pocket. Histidine 19 acts as the Proton acceptor in catalysis. TRNA-binding residues include tyrosine 64, asparagine 66, and asparagine 112.

The protein belongs to the PTH family. Monomer.

The protein resides in the cytoplasm. The enzyme catalyses an N-acyl-L-alpha-aminoacyl-tRNA + H2O = an N-acyl-L-amino acid + a tRNA + H(+). Functionally, hydrolyzes ribosome-free peptidyl-tRNAs (with 1 or more amino acids incorporated), which drop off the ribosome during protein synthesis, or as a result of ribosome stalling. Catalyzes the release of premature peptidyl moieties from peptidyl-tRNA molecules trapped in stalled 50S ribosomal subunits, and thus maintains levels of free tRNAs and 50S ribosomes. The protein is Peptidyl-tRNA hydrolase of Finegoldia magna (strain ATCC 29328 / DSM 20472 / WAL 2508) (Peptostreptococcus magnus).